A 304-amino-acid polypeptide reads, in one-letter code: Quinolinate synthase (304 aa).

2 residues coordinate iminosuccinate: His-24 and Ser-41. Cys-86 serves as a coordination point for [4Fe-4S] cluster. Residues 112–114 and Ser-129 each bind iminosuccinate; that span reads YVN. Cys-171 serves as a coordination point for [4Fe-4S] cluster. Residues 197-199 and Thr-214 each bind iminosuccinate; that span reads HPE. Cys-259 lines the [4Fe-4S] cluster pocket.

This sequence belongs to the quinolinate synthase family. Type 2 subfamily. [4Fe-4S] cluster serves as cofactor.

Its subcellular location is the cytoplasm. The catalysed reaction is iminosuccinate + dihydroxyacetone phosphate = quinolinate + phosphate + 2 H2O + H(+). It participates in cofactor biosynthesis; NAD(+) biosynthesis; quinolinate from iminoaspartate: step 1/1. Its function is as follows. Catalyzes the condensation of iminoaspartate with dihydroxyacetone phosphate to form quinolinate. The chain is Quinolinate synthase from Methanosarcina barkeri (strain Fusaro / DSM 804).